The primary structure comprises 377 residues: Nitric oxide reductase FlRd-NAD(+) reductase (377 aa).

Belongs to the FAD-dependent oxidoreductase family. The cofactor is FAD.

It localises to the cytoplasm. It catalyses the reaction 2 reduced [nitric oxide reductase rubredoxin domain] + NAD(+) + H(+) = 2 oxidized [nitric oxide reductase rubredoxin domain] + NADH. It functions in the pathway nitrogen metabolism; nitric oxide reduction. In terms of biological role, one of at least two accessory proteins for anaerobic nitric oxide (NO) reductase. Reduces the rubredoxin moiety of NO reductase. This is Nitric oxide reductase FlRd-NAD(+) reductase from Escherichia coli O6:K15:H31 (strain 536 / UPEC).